The following is a 561-amino-acid chain: Cytosolic purine 5'-nucleotidase (561 aa).

Asp52 (nucleophile) is an active-site residue. GMP-binding residues include Asp52 and Asp54. IMP is bound by residues Asp52 and Asp54. 2 residues coordinate Mg(2+): Asp52 and Asp54. Asp54 acts as the Proton donor in catalysis. Position 144 (Arg144) interacts with (2R)-2,3-bisphosphoglycerate. The ATP site is built by Arg144 and Asn154. DATP is bound by residues Arg144 and Asn154. Asn154 lines the adenosine pocket. Asn154 contributes to the P(1),P(4)-bis(5'-adenosyl) tetraphosphate binding site. Residues Arg202, Asp206, Lys215, Thr249, and Asn250 each coordinate GMP. Arg202, Asp206, Lys215, Thr249, Asn250, Ser251, and Lys292 together coordinate IMP. Residue Lys292 coordinates GMP. Asp351 is a Mg(2+) binding site. A (2R)-2,3-bisphosphoglycerate-binding site is contributed by Lys362. Lys362 is a binding site for P(1),P(4)-bis(5'-adenosyl) tetraphosphate. Phosphoserine is present on Ser418. Residues Met436 and Gln453 each contribute to the adenosine site. Gln453 and Arg456 together coordinate ATP. Residues Gln453 and Arg456 each contribute to the dATP site. Gln453 serves as a coordination point for P(1),P(4)-bis(5'-adenosyl) tetraphosphate. Tyr457 lines the (2R)-2,3-bisphosphoglycerate pocket. Tyr457 is a P(1),P(4)-bis(5'-adenosyl) tetraphosphate binding site. Residues Ser502, Ser511, and Ser527 each carry the phosphoserine modification. Residues Pro538–Glu561 form a disordered region. The required for tetramer assembly stretch occupies residues His548 to Glu561. Residues Glu550–Glu561 show a composition bias toward acidic residues.

It belongs to the 5'(3')-deoxyribonucleotidase family. As to quaternary structure, homotetramer. Requires Mg(2+) as cofactor. Widely expressed.

It localises to the cytoplasm. Its subcellular location is the cytosol. It catalyses the reaction a ribonucleoside 5'-phosphate + H2O = a ribonucleoside + phosphate. The enzyme catalyses a 2'-deoxyribonucleoside + a ribonucleoside 5'-phosphate = a ribonucleoside + a 2'-deoxyribonucleoside 5'-phosphate. The catalysed reaction is IMP + H2O = inosine + phosphate. It carries out the reaction GMP + H2O = guanosine + phosphate. It catalyses the reaction dIMP + H2O = 2'-deoxyinosine + phosphate. The enzyme catalyses dGMP + H2O = 2'-deoxyguanosine + phosphate. The catalysed reaction is XMP + H2O = xanthosine + phosphate. It carries out the reaction inosine + GMP = guanosine + IMP. It catalyses the reaction dGMP + inosine = 2'-deoxyguanosine + IMP. The enzyme catalyses dIMP + inosine = 2'-deoxyinosine + IMP. The catalysed reaction is inosine + UMP = uridine + IMP. It carries out the reaction inosine + CMP = cytidine + IMP. It catalyses the reaction inosine + AMP = IMP + adenosine. Its activity is regulated as follows. Allosterically activated by various compounds including ATP, 2,3-BPG/2,3-Bisphosphoglyceric acid and Ap4A/P1,P4-bis(5'-adenosyl) tetraphosphate. Binding of an allosteric activator is a prerequisiste to magnesium and substrate binding. Inhibited by inorganic phosphate. Its function is as follows. Broad specificity cytosolic 5'-nucleotidase that catalyzes the dephosphorylation of 6-hydroxypurine nucleoside 5'-monophosphates. In addition, possesses a phosphotransferase activity by which it can transfer a phosphate from a donor nucleoside monophosphate to an acceptor nucleoside, preferably inosine, deoxyinosine and guanosine. Has the highest activities for IMP and GMP followed by dIMP, dGMP and XMP. Could also catalyze the transfer of phosphates from pyrimidine monophosphates but with lower efficiency. Through these activities regulates the purine nucleoside/nucleotide pools within the cell. The protein is Cytosolic purine 5'-nucleotidase of Homo sapiens (Human).